The chain runs to 317 residues: Endochitinase 3 (317 aa).

The signal sequence occupies residues 1–19 (MFVRNALVVTGLLAALTQA). Residues asparagine 25, asparagine 49, and asparagine 169 are each glycosylated (N-linked (GlcNAc...) asparagine). Residues 29–317 (HKLTVYWGAE…NYQKEIKANL (289 aa)) form the GH18 domain. Glutamate 170 serves as the catalytic Proton donor. The N-linked (GlcNAc...) asparagine glycan is linked to asparagine 245.

Belongs to the glycosyl hydrolase 18 family. Chitinase class III subfamily.

It localises to the secreted. The catalysed reaction is Random endo-hydrolysis of N-acetyl-beta-D-glucosaminide (1-&gt;4)-beta-linkages in chitin and chitodextrins.. In terms of biological role, secreted chitinase involved in the degradation of chitin, a component of the cell walls of fungi and exoskeletal elements of some animals (including worms and arthropods). Participates in the infection process and directly acts in the penetration process of the host cuticle. Involved in heat-shock adaptation. This Metarhizium robertsii (strain ARSEF 23 / ATCC MYA-3075) (Metarhizium anisopliae (strain ARSEF 23)) protein is Endochitinase 3 (chi3).